The chain runs to 212 residues: Adenylate kinase (212 aa).

10-15 (GAGKGT) lines the ATP pocket. The segment at 30–59 (STGDMFRAAMANQTEMGRLAKSYIDKGELV) is NMP. Residues threonine 31, arginine 36, 57–59 (ELV), 86–89 (GYPR), and glutamine 93 each bind AMP. The segment at 127–159 (GRIINRKTGETFHKVFNPPVDYKEEDYYQREDD) is LID. ATP is bound by residues arginine 128 and 137–138 (TF). 2 residues coordinate AMP: arginine 156 and arginine 167. Position 195 (glutamine 195) interacts with ATP.

The protein belongs to the adenylate kinase family. Monomer.

It is found in the cytoplasm. The catalysed reaction is AMP + ATP = 2 ADP. Its pathway is purine metabolism; AMP biosynthesis via salvage pathway; AMP from ADP: step 1/1. In terms of biological role, catalyzes the reversible transfer of the terminal phosphate group between ATP and AMP. Plays an important role in cellular energy homeostasis and in adenine nucleotide metabolism. This is Adenylate kinase from Streptococcus agalactiae serotype Ia (strain ATCC 27591 / A909 / CDC SS700).